The primary structure comprises 623 residues: MATRGPTPDKARMGLPDRWLHCPKTGTLINNLFFPFKTPLCKMYDNQIAERRYQFHPAEVFSHPHLHGKKIGLWIDLTNTDRYYFREEVTEHECIYHKMKMAGRGVSPTQEDTDNFIKLVQEFHKKYPDRVVGVHCTHGFNRTGFLIAAYLFQVEEYGLDAAIGEFAENRQKGIYKQDYIDDLFARYDPTEDDKILAPEKPDWEREMSIGMSTQIDNGRPSTSQQIPATNGNNNQNGNQLSGGGDNSKLFMDGLIRGVKVCEDEGKKSMLQAKIKNLCKYNKQGFPGLQPVSLSRGNINLLEQESYMVSWKADGMRYIIYINDGDVYAFDRDNEVFEIENLDFVTKNGAPLMETLVDTEVIIDKVEINGAMCDQPRMLIYDIMRFNSVNVMKEPFYKRFEIIKTEIIDMRTAAFKTGRLKHENQIMSVRRKDFYDLEATAKLFGPKFVQHVGHEIDGLIFQPKKTKYETGRCDKVLKWKPPSHNSVDFLLKVEKKCKEGMLPEWIGYLFVQNLSDPFGTMKATATLKKYHNKIIECTLLVDNQGRPKEWKFMRERTDKSLPNGLRTAENVVETMVNPVTETYLIEYVNHALRVLKRAAAAHRHHQIHQQQLHEGEPEARRQKL.

Residues 13–224 are TPase; it reads MGLPDRWLHC…IDNGRPSTSQ (212 aa). The Tyrosine-protein phosphatase domain occupies 44–196; it reads YDNQIAERRY…YDPTEDDKIL (153 aa). Cysteine 136 functions as the Phosphocysteine intermediate in the catalytic mechanism. A compositionally biased stretch (polar residues) spans 213–229; sequence TQIDNGRPSTSQQIPAT. The tract at residues 213 to 243 is disordered; it reads TQIDNGRPSTSQQIPATNGNNNQNGNQLSGG. Low complexity predominate over residues 230–239; it reads NGNNNQNGNQ. The tract at residues 241-585 is GTase; sequence SGGGDNSKLF…NPVTETYLIE (345 aa). Catalysis depends on lysine 311, which acts as the N6-GMP-lysine intermediate. GTP is bound by residues arginine 316, arginine 331, 357–359, 477–479, and 553–558; these read DTE, KWK, and RERTDK. The segment at 603–623 is disordered; the sequence is HHQIHQQQLHEGEPEARRQKL. Residues 610–623 show a composition bias toward basic and acidic residues; that stretch reads QLHEGEPEARRQKL.

This sequence in the N-terminal section; belongs to the non-receptor class of the protein-tyrosine phosphatase family. In the C-terminal section; belongs to the eukaryotic GTase family.

The protein localises to the nucleus. The catalysed reaction is a 5'-end triphospho-ribonucleoside in mRNA + H2O = a 5'-end diphospho-ribonucleoside in mRNA + phosphate + H(+). It catalyses the reaction a 5'-end diphospho-ribonucleoside in mRNA + GTP + H(+) = a 5'-end (5'-triphosphoguanosine)-ribonucleoside in mRNA + diphosphate. With respect to regulation, RNA triphosphatase activity is inhibited by magnesium. In terms of biological role, bifunctional mRNA-capping enzyme exhibiting RNA 5'-triphosphate monophosphatase activity in the N-terminal part and mRNA guanylyltransferase activity in the C-terminal part. Catalyzes the first two steps of cap formation: by removing the gamma-phosphate from the 5'-triphosphate end of nascent mRNA to yield a diphosphate end, and by transferring the GMP moiety of GTP to the 5'-diphosphate terminus via a covalent enzyme-GMP reaction intermediate. The protein is mRNA-capping enzyme (cel-1) of Caenorhabditis elegans.